A 54-amino-acid chain; its full sequence is Lectin alpha chain (54 aa).

This sequence belongs to the leguminous lectin family. Tetramer of two alpha and two beta chains.

In Lathyrus tingitanus (Tangier pea), this protein is Lectin alpha chain.